The following is a 179-amino-acid chain: Cell division protein SepF (179 aa).

A disordered region spans residues D19–K55. Residues T33–K55 show a composition bias toward polar residues.

This sequence belongs to the SepF family. Homodimer. Interacts with FtsZ.

Its subcellular location is the cytoplasm. In terms of biological role, cell division protein that is part of the divisome complex and is recruited early to the Z-ring. Probably stimulates Z-ring formation, perhaps through the cross-linking of FtsZ protofilaments. Its function overlaps with FtsA. The sequence is that of Cell division protein SepF from Streptococcus pneumoniae (strain JJA).